The following is a 523-amino-acid chain: Alanine aminotransferase 2 (523 aa).

Positions 1–25 are disordered; the sequence is MQRAAALVRRGCGPRTPSSWGRSQS. Pyridoxal 5'-phosphate is bound by residues alanine 187, serine 188, tyrosine 216, asparagine 271, and serine 338. Lysine 341 is subject to N6-(pyridoxal phosphate)lysine. Arginine 350 contributes to the pyridoxal 5'-phosphate binding site. N6-acetyllysine is present on residues lysine 415, lysine 505, and lysine 512.

This sequence belongs to the class-I pyridoxal-phosphate-dependent aminotransferase family. Alanine aminotransferase subfamily. As to quaternary structure, homodimer. It depends on pyridoxal 5'-phosphate as a cofactor. In terms of tissue distribution, expressed at high levels in muscle, adipose tissue, kidney and brain and at lower levels in the liver and breast.

The enzyme catalyses L-alanine + 2-oxoglutarate = pyruvate + L-glutamate. It participates in amino-acid degradation; L-alanine degradation via transaminase pathway; pyruvate from L-alanine: step 1/1. Functionally, catalyzes the reversible transamination between alanine and 2-oxoglutarate to form pyruvate and glutamate. The sequence is that of Alanine aminotransferase 2 (GPT2) from Homo sapiens (Human).